The chain runs to 240 residues: TATA-box-binding protein (240 aa).

The segment at 21–61 is disordered; it reads NTRQVWENQNRDGTKPATTFQSEEDIKRAAPESEKDTSATS. Over residues 44–57 the composition is skewed to basic and acidic residues; sequence EDIKRAAPESEKDT. 2 repeat units span residues 67-143 and 157-234.

Belongs to the TBP family. Binds DNA as monomer. The 1.2 MDa TFIID complex is composed of TATA binding protein (TBP) and the 14 TBP-associated factors. One copy of each TAF1, TAF2, TAF3, TAF7, TAF8, TAF11, TAF13, two copies of each TAF4, TAF5, TAF6, TAF9, TAF10, TAF12, and three copies of TAF14. Interacts with TFC8.

It localises to the nucleus. General transcription factor that functions at the core of the DNA-binding general transcription factor complex TFIID. Binding of TFIID to a promoter (with or without TATA element) is the initial step in preinitiation complex (PIC) formation. TFIID plays a key role in the regulation of gene expression by RNA polymerase II through different activities such as transcription activator interaction, core promoter recognition and selectivity, TFIIA and TFIIB interaction, chromatin modification (histone acetylation by TAF1), facilitation of DNA opening and initiation of transcription. This chain is TATA-box-binding protein (SPT15), found in Saccharomyces cerevisiae (strain ATCC 204508 / S288c) (Baker's yeast).